The following is a 527-amino-acid chain: V-set and immunoglobulin domain-containing protein 10 (527 aa).

Residues 1 to 13 (MWTRRWIQFLVLC) form the signal peptide. Ig-like C2-type domains follow at residues 14 to 111 (LHLW…LKVS), 123 to 212 (PTRT…RQLL), 216 to 306 (PPIT…CQIQ), and 310 to 399 (PLLE…KEIN). Residues 23–409 (YLGVFRGDVN…VWLTVNKPHN (387 aa)) lie on the Extracellular side of the membrane. Residues Asn32, Asn41, Asn52, Asn64, Asn74, Asn90, Asn129, Asn139, Asn191, Asn206, Asn226, Asn260, Asn276, Asn325, Asn346, and Asn375 are each glycosylated (N-linked (GlcNAc...) asparagine). The cysteines at positions 144 and 194 are disulfide-linked. Cysteines 238 and 288 form a disulfide. The cysteines at positions 330 and 387 are disulfide-linked. A helical transmembrane segment spans residues 410–430 (IVGLVTALLLLFLLVVAIITG). Over 431-527 (TVLYCDPQIY…TGEENQNEEI (97 aa)) the chain is Cytoplasmic. The tract at residues 501–527 (RPPESTSSDLFSEVSDDTGEENQNEEI) is disordered. Residues 514 to 527 (VSDDTGEENQNEEI) show a composition bias toward acidic residues.

It is found in the membrane. The polypeptide is V-set and immunoglobulin domain-containing protein 10 (vsig10) (Xenopus laevis (African clawed frog)).